Consider the following 320-residue polypeptide: Mycothiol acetyltransferase (320 aa).

N-acetyltransferase domains are found at residues 16-141 (RQVR…RSLR) and 152-320 (LQIR…AALA). E36 lines the 1D-myo-inositol 2-(L-cysteinylamino)-2-deoxy-alpha-D-glucopyranoside pocket. Residues 80-82 (LVV) and 88-93 (RRGIAT) each bind acetyl-CoA. 3 residues coordinate 1D-myo-inositol 2-(L-cysteinylamino)-2-deoxy-alpha-D-glucopyranoside: E179, K229, and E239. Residues 243-245 (LGV) and 250-256 (QGRGLGR) each bind acetyl-CoA. Y284 contributes to the 1D-myo-inositol 2-(L-cysteinylamino)-2-deoxy-alpha-D-glucopyranoside binding site. 289–294 (NIAAVR) is a binding site for acetyl-CoA.

This sequence belongs to the acetyltransferase family. MshD subfamily. In terms of assembly, monomer.

It catalyses the reaction 1D-myo-inositol 2-(L-cysteinylamino)-2-deoxy-alpha-D-glucopyranoside + acetyl-CoA = mycothiol + CoA + H(+). Functionally, catalyzes the transfer of acetyl from acetyl-CoA to desacetylmycothiol (Cys-GlcN-Ins) to form mycothiol. This chain is Mycothiol acetyltransferase, found in Mycobacterium marinum (strain ATCC BAA-535 / M).